The primary structure comprises 364 residues: Fructose-bisphosphate aldolase B (364 aa).

Ala2 is subject to N-acetylalanine. Lys13 is subject to N6-succinyllysine. A Phosphoserine modification is found at Ser36. Residue Thr39 is modified to Phosphothreonine. Arg43 contacts beta-D-fructose 1,6-bisphosphate. Phosphoserine is present on Ser89. Residue Thr119 is modified to Phosphothreonine. Lys121 bears the N6-succinyllysine mark. A Phosphoserine modification is found at Ser132. The active-site Proton acceptor is Glu188. Lys230 serves as the catalytic Schiff-base intermediate with dihydroxyacetone-P. Ser272, Ser276, Ser299, and Ser301 each carry phosphoserine. Position 272–274 (Ser272–Gly274) interacts with beta-D-fructose 1,6-bisphosphate. Arg304 serves as a coordination point for beta-D-fructose 1,6-bisphosphate. Ser309 is modified (phosphoserine). Lys317 is modified (N6-succinyllysine).

The protein belongs to the class I fructose-bisphosphate aldolase family. Homotetramer. Interacts with BBS1, BBS2, BBS4 and BBS7. Forms a ternary complex with G6PD and TP53; this interaction is direct.

It is found in the cytoplasm. It localises to the cytosol. The protein localises to the cytoskeleton. The protein resides in the microtubule organizing center. Its subcellular location is the centrosome. It is found in the centriolar satellite. It catalyses the reaction beta-D-fructose 1,6-bisphosphate = D-glyceraldehyde 3-phosphate + dihydroxyacetone phosphate. The enzyme catalyses beta-D-fructose 1-phosphate = D-glyceraldehyde + dihydroxyacetone phosphate. It functions in the pathway carbohydrate degradation; glycolysis; D-glyceraldehyde 3-phosphate and glycerone phosphate from D-glucose: step 4/4. The protein operates within carbohydrate biosynthesis; gluconeogenesis. Its pathway is carbohydrate metabolism; fructose metabolism. Its function is as follows. Catalyzes the aldol cleavage of fructose 1,6-biphosphate to form two triosephosphates dihydroxyacetone phosphate and D-glyceraldehyde 3-phosphate in glycolysis as well as the reverse stereospecific aldol addition reaction in gluconeogenesis. In fructolysis, metabolizes fructose 1-phosphate derived from the phosphorylation of dietary fructose by fructokinase into dihydroxyacetone phosphate and D-glyceraldehyde. Acts as an adapter independently of its enzymatic activity, exerts a tumor suppressor role by stabilizing the ternary complex with G6PD and TP53 to inhibit G6PD activity and keep oxidative pentose phosphate metabolism in check. The protein is Fructose-bisphosphate aldolase B (Aldob) of Rattus norvegicus (Rat).